A 289-amino-acid chain; its full sequence is ATP synthase gamma chain (289 aa).

This sequence belongs to the ATPase gamma chain family. In terms of assembly, F-type ATPases have 2 components, CF(1) - the catalytic core - and CF(0) - the membrane proton channel. CF(1) has five subunits: alpha(3), beta(3), gamma(1), delta(1), epsilon(1). CF(0) has three main subunits: a, b and c.

It is found in the cell inner membrane. Functionally, produces ATP from ADP in the presence of a proton gradient across the membrane. The gamma chain is believed to be important in regulating ATPase activity and the flow of protons through the CF(0) complex. The chain is ATP synthase gamma chain from Mannheimia succiniciproducens (strain KCTC 0769BP / MBEL55E).